The sequence spans 423 residues: Glutamate-1-semialdehyde 2,1-aminomutase (423 aa).

An N6-(pyridoxal phosphate)lysine modification is found at Lys266.

It belongs to the class-III pyridoxal-phosphate-dependent aminotransferase family. HemL subfamily. As to quaternary structure, homodimer. Pyridoxal 5'-phosphate serves as cofactor.

The protein resides in the cytoplasm. The catalysed reaction is (S)-4-amino-5-oxopentanoate = 5-aminolevulinate. It functions in the pathway porphyrin-containing compound metabolism; protoporphyrin-IX biosynthesis; 5-aminolevulinate from L-glutamyl-tRNA(Glu): step 2/2. The protein is Glutamate-1-semialdehyde 2,1-aminomutase of Desulfovibrio desulfuricans (strain ATCC 27774 / DSM 6949 / MB).